Here is a 309-residue protein sequence, read N- to C-terminus: Malate dehydrogenase (309 aa).

NAD(+)-binding positions include 9 to 14 (GAGFVG) and Asp-33. Positions 82 and 88 each coordinate substrate. NAD(+) is bound by residues Asn-95 and 118–120 (VNN). Residues Asn-120 and Arg-151 each contribute to the substrate site. The active-site Proton acceptor is the His-175.

Belongs to the LDH/MDH superfamily. MDH type 3 family.

It carries out the reaction (S)-malate + NAD(+) = oxaloacetate + NADH + H(+). Functionally, catalyzes the reversible oxidation of malate to oxaloacetate. The chain is Malate dehydrogenase from Roseiflexus sp. (strain RS-1).